The sequence spans 477 residues: NADH-quinone oxidoreductase subunit N (477 aa).

13 consecutive transmembrane segments (helical) span residues 7–27 (VLAH…LILI), 37–57 (GPMT…LVLG), 77–97 (FMKV…QTYL), 109–129 (ILIL…GLIA), 162–182 (FVLG…IYGF), 201–221 (LGVV…MSTV), 233–253 (GAPT…AIAI), 272–292 (IIVF…IGQT), 297–317 (LMAY…AAGT), 323–343 (GVLA…AAIL), 369–389 (AFFL…AGFF), 402–424 (HLYP…YLRI), and 446–466 (AVLI…GSFV).

The protein belongs to the complex I subunit 2 family. NDH-1 is composed of 14 different subunits. Subunits NuoA, H, J, K, L, M, N constitute the membrane sector of the complex.

Its subcellular location is the cell inner membrane. The catalysed reaction is a quinone + NADH + 5 H(+)(in) = a quinol + NAD(+) + 4 H(+)(out). Its function is as follows. NDH-1 shuttles electrons from NADH, via FMN and iron-sulfur (Fe-S) centers, to quinones in the respiratory chain. The immediate electron acceptor for the enzyme in this species is believed to be ubiquinone. Couples the redox reaction to proton translocation (for every two electrons transferred, four hydrogen ions are translocated across the cytoplasmic membrane), and thus conserves the redox energy in a proton gradient. This chain is NADH-quinone oxidoreductase subunit N, found in Beijerinckia indica subsp. indica (strain ATCC 9039 / DSM 1715 / NCIMB 8712).